The chain runs to 88 residues: Small ribosomal subunit protein uS15 (88 aa).

This sequence belongs to the universal ribosomal protein uS15 family. As to quaternary structure, part of the 30S ribosomal subunit. Forms a bridge to the 50S subunit in the 70S ribosome, contacting the 23S rRNA.

Its function is as follows. One of the primary rRNA binding proteins, it binds directly to 16S rRNA where it helps nucleate assembly of the platform of the 30S subunit by binding and bridging several RNA helices of the 16S rRNA. Functionally, forms an intersubunit bridge (bridge B4) with the 23S rRNA of the 50S subunit in the ribosome. This Pelobacter propionicus (strain DSM 2379 / NBRC 103807 / OttBd1) protein is Small ribosomal subunit protein uS15.